Reading from the N-terminus, the 197-residue chain is Isochorismatase domain-containing protein 2 (197 aa).

The protein belongs to the isochorismatase family.

The protein is Isochorismatase domain-containing protein 2 (isoc2) of Danio rerio (Zebrafish).